Here is a 142-residue protein sequence, read N- to C-terminus: Hemoglobin subunit alpha-1 (142 aa).

Residues 2-142 (VLSPADKTNI…VSTVLTSKYR (141 aa)) enclose the Globin domain. Histidine 59 is a binding site for O2. Histidine 88 is a binding site for heme b.

This sequence belongs to the globin family. Heterotetramer of two alpha chains and two beta chains. In terms of tissue distribution, red blood cells.

Involved in oxygen transport from the lung to the various peripheral tissues. This Arctocephalus galapagoensis (Galapagoes fur seal) protein is Hemoglobin subunit alpha-1.